Reading from the N-terminus, the 338-residue chain is Popeye domain-containing protein 1 (338 aa).

Residues 1-40 (MATESILITTLPMDLNSQINNVTFGLNENETLCENWREIH) lie on the Extracellular side of the membrane. 2 N-linked (GlcNAc...) asparagine glycosylation sites follow: N21 and N29. A helical membrane pass occupies residues 41 to 61 (HLVFHLANTCFAAGLVIPSTL). At 62 to 65 (NLHM) the chain is on the cytoplasmic side. The chain crosses the membrane as a helical span at residues 66–86 (ILLRGMLCLGCIFFIIWAILF). The Extracellular portion of the chain corresponds to 87-91 (RCALD). The helical transmembrane segment at 92–112 (IMIWNATFLSMNFMHFIYLVY) threads the bilayer. Over 113-338 (KKRPIKIEKD…VGPLSHAVFC (226 aa)) the chain is Cytoplasmic.

It belongs to the popeye family.

It localises to the lateral cell membrane. Its subcellular location is the cell junction. It is found in the tight junction. The protein resides in the membrane. The protein localises to the cell membrane. It localises to the sarcolemma. Its subcellular location is the caveola. Functionally, cell adhesion molecule involved in the establishment and/or maintenance of cell integrity. May play a role in vamp3-mediated vesicular transport and recycling of different receptor molecules. May be involved in the formation and regulation of the tight junction (TJ) paracellular permeability barrier in epithelial cells. May induce primordial adhesive contact and aggregation of epithelial cells in a Ca(2+)-independent manner. May be involved in epithelial movement during corneal sheet formation and regeneration. May play a role in the regulation of cell shape and movement by modulating the Rho-GTPase activity. May be involved in skeletal muscle and heart development as well as in the maintenance of heart function. May also be involved in striated muscle regeneration and in the regulation of cell spreading. The sequence is that of Popeye domain-containing protein 1 (popdc1) from Xenopus tropicalis (Western clawed frog).